A 665-amino-acid polypeptide reads, in one-letter code: Alpha-1,4-glucan:maltose-1-phosphate maltosyltransferase (665 aa).

Alpha-maltose 1-phosphate is bound by residues Lys-255, Gln-315, and Asp-350. Asp-386 functions as the Nucleophile in the catalytic mechanism. Asn-387 lines the alpha-maltose 1-phosphate pocket. Residue Glu-415 is the Proton donor of the active site. 526-527 (KY) provides a ligand contact to alpha-maltose 1-phosphate.

The protein belongs to the glycosyl hydrolase 13 family. GlgE subfamily. In terms of assembly, homodimer.

The enzyme catalyses alpha-maltose 1-phosphate + [(1-&gt;4)-alpha-D-glucosyl](n) = [(1-&gt;4)-alpha-D-glucosyl](n+2) + phosphate. Maltosyltransferase that uses maltose 1-phosphate (M1P) as the sugar donor to elongate linear or branched alpha-(1-&gt;4)-glucans. Is involved in a branched alpha-glucan biosynthetic pathway from trehalose, together with TreS, Mak and GlgB. The sequence is that of Alpha-1,4-glucan:maltose-1-phosphate maltosyltransferase from Myxococcus xanthus (strain DK1622).